The sequence spans 682 residues: Methionine--tRNA ligase (682 aa).

A 'HIGH' region motif is present at residues 15–25 (PYANGAIHLGH). Positions 146, 149, 159, and 162 each coordinate Zn(2+). A 'KMSKS' region motif is present at residues 331–335 (KMSKS). Residue K334 coordinates ATP. The region spanning 580–682 (DFAKLDLRVA…QGVKPGMQVK (103 aa)) is the tRNA-binding domain.

The protein belongs to the class-I aminoacyl-tRNA synthetase family. MetG type 1 subfamily. In terms of assembly, homodimer. It depends on Zn(2+) as a cofactor.

The protein localises to the cytoplasm. The catalysed reaction is tRNA(Met) + L-methionine + ATP = L-methionyl-tRNA(Met) + AMP + diphosphate. In terms of biological role, is required not only for elongation of protein synthesis but also for the initiation of all mRNA translation through initiator tRNA(fMet) aminoacylation. In Pasteurella multocida (strain Pm70), this protein is Methionine--tRNA ligase.